The sequence spans 152 residues: Transcriptional regulator MraZ (152 aa).

SpoVT-AbrB domains lie at 5–52 (ATLV…TLPE) and 81–124 (ASEC…DETT).

It belongs to the MraZ family. In terms of assembly, forms oligomers.

It localises to the cytoplasm. Its subcellular location is the nucleoid. In terms of biological role, negatively regulates its own expression and that of the subsequent genes in the proximal part of the division and cell wall (dcw) gene cluster. Acts by binding directly to DNA. May also regulate the expression of genes outside the dcw cluster. The protein is Transcriptional regulator MraZ of Enterobacter sp. (strain 638).